A 562-amino-acid polypeptide reads, in one-letter code: Methionine--tRNA ligase, mitochondrial (562 aa).

Residues 1 to 10 (MLRSLALRTF) constitute a mitochondrion transit peptide. A 'HIGH' region motif is present at residues 43–53 (FYVNAAPHLGH). The 'KMSKS' region signature appears at 332-336 (KMSKS). Residue Lys335 coordinates ATP.

The protein belongs to the class-I aminoacyl-tRNA synthetase family.

The protein localises to the mitochondrion matrix. The catalysed reaction is tRNA(Met) + L-methionine + ATP = L-methionyl-tRNA(Met) + AMP + diphosphate. The protein is Methionine--tRNA ligase, mitochondrial (mars2) of Xenopus laevis (African clawed frog).